The chain runs to 220 residues: Membrane steroid-binding protein 1 (220 aa).

Residues V22–F42 traverse the membrane as a helical segment. Residues E74–K171 form the Cytochrome b5 heme-binding domain. Residues E74–K171 are steroid-binding. The interval G174–E220 is disordered. A compositionally biased stretch (polar residues) spans E178–G200. The span at V203 to E220 shows a compositional bias: basic and acidic residues.

The protein belongs to the cytochrome b5 family. MAPR subfamily. Interacts with BAK1 (via extracellular region). As to expression, expressed in cotyledons, stems, roots, leaves, flower and silique stalks, pistils and stigmas, but not in anthers.

The protein localises to the cell membrane. The protein resides in the endosome membrane. Functionally, MSBP1 can bind to multiple steroid compounds with different affinities. Negatively regulates cell elongation and brassinosteroid signaling. May act as a coreceptor with BAK1 and enhances its endocytosis. The sequence is that of Membrane steroid-binding protein 1 (MSBP1) from Arabidopsis thaliana (Mouse-ear cress).